Consider the following 205-residue polypeptide: Gap junction epsilon-1 protein (205 aa).

Topologically, residues M1–F23 are cytoplasmic. The chain crosses the membrane as a helical span at residues H24 to Y44. At G45–S76 the chain is on the extracellular side. 2 cysteine pairs are disulfide-bonded: C53–C161 and C64–C148. Residues F77–A97 form a helical membrane-spanning segment. Topologically, residues C98–Y112 are cytoplasmic. Residues T113–L133 form a helical membrane-spanning segment. Over Q134–T170 the chain is Extracellular. The chain crosses the membrane as a helical span at residues I171–I191. At F192–Q205 the chain is on the cytoplasmic side.

Belongs to the connexin family. Beta-type (group I) subfamily. A connexon is composed of a hexamer of connexins. Not detected in lens or retina.

Its subcellular location is the cell membrane. Mediates calcium-independent ATP release, suggesting activity as a hemichannel. Does not form functional gap junctions. In Homo sapiens (Human), this protein is Gap junction epsilon-1 protein (GJE1).